The sequence spans 308 residues: Glycine--tRNA ligase alpha subunit (308 aa).

The protein belongs to the class-II aminoacyl-tRNA synthetase family. In terms of assembly, tetramer of two alpha and two beta subunits.

The protein resides in the cytoplasm. It carries out the reaction tRNA(Gly) + glycine + ATP = glycyl-tRNA(Gly) + AMP + diphosphate. This is Glycine--tRNA ligase alpha subunit from Brucella abortus (strain 2308).